Consider the following 195-residue polypeptide: Probable GTP-binding protein EngB (195 aa).

One can recognise an EngB-type G domain in the interval 22 to 195 (QLPEIALAGR…WSALSRYIKR (174 aa)). Residues 30-37 (GRSNVGKS), 57-61 (GKTQT), 75-78 (DVPG), 142-145 (TKLD), and 174-176 (FSA) contribute to the GTP site. Mg(2+) contacts are provided by serine 37 and threonine 59.

It belongs to the TRAFAC class TrmE-Era-EngA-EngB-Septin-like GTPase superfamily. EngB GTPase family. Requires Mg(2+) as cofactor.

Its function is as follows. Necessary for normal cell division and for the maintenance of normal septation. The protein is Probable GTP-binding protein EngB of Oceanobacillus iheyensis (strain DSM 14371 / CIP 107618 / JCM 11309 / KCTC 3954 / HTE831).